Here is a 198-residue protein sequence, read N- to C-terminus: Ribosome maturation factor RimM (198 aa).

The PRC barrel domain occupies 92–168 (DDEYYHADLI…IELPAEIEGE (77 aa)). Over residues 163-172 (AEIEGEDQDS) the composition is skewed to acidic residues. Residues 163–198 (AEIEGEDQDSSDNAGSPEGDAAASNSARHPRESGDP) are disordered.

This sequence belongs to the RimM family. In terms of assembly, binds ribosomal protein uS19.

Its subcellular location is the cytoplasm. Functionally, an accessory protein needed during the final step in the assembly of 30S ribosomal subunit, possibly for assembly of the head region. Essential for efficient processing of 16S rRNA. May be needed both before and after RbfA during the maturation of 16S rRNA. It has affinity for free ribosomal 30S subunits but not for 70S ribosomes. This Bradyrhizobium sp. (strain BTAi1 / ATCC BAA-1182) protein is Ribosome maturation factor RimM.